The primary structure comprises 826 residues: E3 ubiquitin-protein ligase SH3RF1 (826 aa).

An RING-type zinc finger spans residues 12–53; it reads CPVCLERLDASAKVLPCQHTFCKRCLLGIVSSRKELRCPECR. The interval 80-130 is disordered; the sequence is PRKAGDGGSAGNSTNALRAQGSVTTNGGLNDAQNTQSGQQRIQARSPPVRG. Residues 90–122 are compositionally biased toward polar residues; it reads GNSTNALRAQGSVTTNGGLNDAQNTQSGQQRIQ. 2 consecutive SH3 domains span residues 132–191 and 194–257; these read PQLP…IIKP and QPPP…FNSA. Positions 266 to 319 are disordered; it reads KPSGADTGEGSSGTSHSGNSQKQADAKKNTKKRHSFTSLTMSNKSSQSVQNRHS. A compositionally biased stretch (low complexity) spans 273–285; it reads GEGSSGTSHSGNS. Positions 301-317 are enriched in polar residues; it reads FTSLTMSNKSSQSVQNR. Residues 398 to 459 form the SH3 3 domain; sequence ARPSVFIAIY…PGNYVAPVTR (62 aa). Disordered stretches follow at residues 647–694 and 725–759; these read NSAA…QTNS and DSVS…CSSL. Residues 652 to 663 show a composition bias toward basic and acidic residues; the sequence is KQDKDSKKEKKG. The 60-residue stretch at 767-826 folds into the SH3 4 domain; the sequence is RPCERYRVMVSYPPQSEAELELKEGDIVFVHKKREDGWFKGTLQRNGKTGLFPGSFVENI.

The protein belongs to the SH3RF family. In terms of processing, autoubiquitinated. Ubiquitinated by SH3RF2, leading to proteasome-mediated degradation.

The protein resides in the cytoplasm. The protein localises to the perinuclear region. It localises to the cell projection. It is found in the lamellipodium. Its subcellular location is the golgi apparatus. The protein resides in the trans-Golgi network. The catalysed reaction is S-ubiquitinyl-[E2 ubiquitin-conjugating enzyme]-L-cysteine + [acceptor protein]-L-lysine = [E2 ubiquitin-conjugating enzyme]-L-cysteine + N(6)-ubiquitinyl-[acceptor protein]-L-lysine.. It participates in protein modification; protein ubiquitination. In terms of biological role, has E3 ubiquitin-protein ligase activity. In the absence of an external substrate, it can catalyze self-ubiquitination. Acts as a scaffold protein that contributes to the effective activation of the JNK signaling pathway. Plays an essential role in the anterior neural development. This Xenopus laevis (African clawed frog) protein is E3 ubiquitin-protein ligase SH3RF1 (sh3rf1).